A 205-amino-acid polypeptide reads, in one-letter code: Shieldin complex subunit 1 (205 aa).

In terms of assembly, component of the shieldin complex, consisting of SHLD1, SHLD2, SHLD3 and MAD2L2/REV7. Within the complex, SHLD2 forms a scaffold which interacts with a SHLD3-MAD2L2 subcomplex via its N-terminus, and with SHLD1 via its C-terminus. Interacts with ASTE1.

The protein resides in the chromosome. Functionally, component of the shieldin complex, which plays an important role in repair of DNA double-stranded breaks (DSBs). During G1 and S phase of the cell cycle, the complex functions downstream of TP53BP1 to promote non-homologous end joining (NHEJ) and suppress DNA end resection. Mediates various NHEJ-dependent processes including immunoglobulin class-switch recombination, and fusion of unprotected telomeres. In Homo sapiens (Human), this protein is Shieldin complex subunit 1.